Here is a 74-residue protein sequence, read N- to C-terminus: O-conotoxin GeXXXIA (74 aa).

The signal sequence occupies residues 1–22 (MKLTCVLIITVLFLTACQLTTA). A propeptide spanning residues 23–33 (VTYSRGEHKHR) is cleaved from the precursor.

Belongs to the conotoxin O1 superfamily. In terms of assembly, homodimer; disulfide-linked. In terms of processing, may contain 2 intrachain disulfide bonds and probably one interchain disulfide bond forming the homodimer. The disulfide pairing is not important for activity towards the different nAChR subtypes, since this peptide without disulfide bond or with different disulfide bonds shows the same activity. Expressed by the venom duct.

The protein resides in the secreted. The activity of this natural homodimer has not been tested due to low abundance. The synthetic linear peptide has been refolded, giving 4 different monomeric isomers (m1 to m4) with 2 disulfide bonds each. All isomers potently inhibit rat alpha-1-beta-1-delta-epsilon/CHRNA1-CHRNB1-CHRND-CHRNE and human alpha-9-alpha-10/CHRNA9-CHRNA10 nicotinic acetylcholine receptors (nAChR). In addition, they show a modest inhibition at human alpha-3-beta-2/CHRNA3-CHRNB2, alpha-3-beta-4/CHRNA3-CHRNB4, alpha-7/CHRNA7, and alpha-4-beta-4/CHRNA4-CHRNB4. The synthetic monomer peptide without disulfide bonds shows a potent activity on alpha-9-alpha-10/CHRNA9 and CHRNA10 (IC(50)=16.2 nM). This linear peptide does not act as a competitive antagonist, or as a channel pore blocker of nAChR. The polypeptide is O-conotoxin GeXXXIA (Conus generalis (General cone)).